Consider the following 463-residue polypeptide: Phosphoglucosamine mutase (463 aa).

The active-site Phosphoserine intermediate is the S101. Mg(2+)-binding residues include S101, D256, D258, and D260. The residue at position 101 (S101) is a Phosphoserine.

This sequence belongs to the phosphohexose mutase family. It depends on Mg(2+) as a cofactor. Activated by phosphorylation.

It carries out the reaction alpha-D-glucosamine 1-phosphate = D-glucosamine 6-phosphate. Functionally, catalyzes the conversion of glucosamine-6-phosphate to glucosamine-1-phosphate. The polypeptide is Phosphoglucosamine mutase (Desulforapulum autotrophicum (strain ATCC 43914 / DSM 3382 / VKM B-1955 / HRM2) (Desulfobacterium autotrophicum)).